We begin with the raw amino-acid sequence, 920 residues long: Sensor histidine kinase SsrA (920 aa).

Residues 1–19 (MNLLNLKNTLQTSLVIRLT) lie on the Cytoplasmic side of the membrane. The chain crosses the membrane as a helical span at residues 20-40 (FLFLLTTIIIWLLSVLTAAYI). Topologically, residues 41-291 (SMVQKRQHII…YGNLHNRILK (251 aa)) are periplasmic. A helical transmembrane segment spans residues 292–312 (IILQQIPFTLTALVLMTSAFC). Over 313 to 920 (WLLHRSLAKP…RMIFKNYTIT (608 aa)) the chain is Cytoplasmic. One can recognise an HAMP domain in the interval 317-369 (RSLAKPLWRFVDVINKTATAPLSTRLPAQRLDELDSIAGAFNQLLDTLQVQYD). Residues 354-395 (AGAFNQLLDTLQVQYDNLENKVAERTQALNEAKKRAERANKR) adopt a coiled-coil conformation. The region spanning 402 to 614 (VISHELRTPM…CVSLVLPLQE (213 aa)) is the Histidine kinase domain. The ATP site is built by His405 and Asp549. His405 bears the Phosphohistidine; by autocatalysis mark. In terms of domain architecture, Response regulatory spans 690-808 (QILLVDDADI…TLARYISIAA (119 aa)). A 4-aspartylphosphate modification is found at Asp739.

Autophosphorylated.

Its subcellular location is the cell inner membrane. It catalyses the reaction ATP + protein L-histidine = ADP + protein N-phospho-L-histidine.. In terms of biological role, member of the two-component regulatory system SsrA/SsrB (SpiR/SsrB) that is required for intracellular proliferation and systemic dissemination within the host. When inside acidic Salmonella-containing vesicles (SCV) within host cells the SsrA sensor kinase autophosphorylates and the phosphoryl group is transferred to the response regulator SsrB; phosphorylated SsrB activates the expression of genes encoding virulence proteins, including pathogenicity island 2 (SPI2) and other horizontally acquired genes, and antagonizes the action of transcriptional repressor hns (H-NS). In Salmonella typhimurium (strain LT2 / SGSC1412 / ATCC 700720), this protein is Sensor histidine kinase SsrA.